A 77-amino-acid chain; its full sequence is EMBRYO SURROUNDING FACTOR 1-like protein 9 (77 aa).

The first 22 residues, 1 to 22 (MSSSRFLILCIILISFFPLHEC), serve as a signal peptide directing secretion. Disulfide bonds link C38/C54, C43/C75, C52/C71, and C55/C64.

It belongs to the MEG family. In terms of tissue distribution, expressed in flowers.

The polypeptide is EMBRYO SURROUNDING FACTOR 1-like protein 9 (ESFL9) (Arabidopsis thaliana (Mouse-ear cress)).